Here is a 42-residue protein sequence, read N- to C-terminus: Delta-actinopoditoxin-Mb1a (42 aa).

4 disulfide bridges follow: Cys1–Cys15, Cys8–Cys20, Cys14–Cys31, and Cys16–Cys42.

It belongs to the neurotoxin 06 (delta-actx) family. Expressed by the venom gland.

It localises to the secreted. Its function is as follows. Neurotoxin that slows the inactivation of vertebrate tetrodotoxin-sensitive voltage-gated sodium channels (Nav) and most likely insect sodium channels presumably by binding to site 3 of the channel. Effects are an increase in resting tension, a muscle fasciculation and a decrease in indirect twitch tension. It fails to affect tetrodotoxin-resistant sodium currents. In vivo, is lethal to both vertebrates and insects. The sequence is that of Delta-actinopoditoxin-Mb1a from Missulena bradleyi (Eastern mouse spider).